A 169-amino-acid polypeptide reads, in one-letter code: Acetolactate synthase small subunit (169 aa).

Positions 8-85 constitute an ACT domain; the sequence is TLSVLVEDTP…KVVEQEADNS (78 aa).

The protein belongs to the acetolactate synthase small subunit family. Dimer of large and small chains.

The catalysed reaction is 2 pyruvate + H(+) = (2S)-2-acetolactate + CO2. Its pathway is amino-acid biosynthesis; L-isoleucine biosynthesis; L-isoleucine from 2-oxobutanoate: step 1/4. It participates in amino-acid biosynthesis; L-valine biosynthesis; L-valine from pyruvate: step 1/4. In Mycobacterium leprae (strain TN), this protein is Acetolactate synthase small subunit (ilvH).